The primary structure comprises 395 residues: Chaperone protein DnaJ (395 aa).

A J domain is found at 5–70 (DFYEVLGVDK…NKRAAYDRMG (66 aa)). The segment at 145–223 (GKDETIKVPT…CDGVGRVRKT (79 aa)) adopts a CR-type zinc-finger fold. The Zn(2+) site is built by cysteine 158, cysteine 161, cysteine 175, cysteine 178, cysteine 197, cysteine 200, cysteine 211, and cysteine 214. CXXCXGXG motif repeat units follow at residues 158-165 (CERCDGQG), 175-182 (CGTCQGAG), 197-204 (CPQCGGRG), and 211-218 (CNDCDGVG).

The protein belongs to the DnaJ family. Homodimer. The cofactor is Zn(2+).

The protein localises to the cytoplasm. Its function is as follows. Participates actively in the response to hyperosmotic and heat shock by preventing the aggregation of stress-denatured proteins and by disaggregating proteins, also in an autonomous, DnaK-independent fashion. Unfolded proteins bind initially to DnaJ; upon interaction with the DnaJ-bound protein, DnaK hydrolyzes its bound ATP, resulting in the formation of a stable complex. GrpE releases ADP from DnaK; ATP binding to DnaK triggers the release of the substrate protein, thus completing the reaction cycle. Several rounds of ATP-dependent interactions between DnaJ, DnaK and GrpE are required for fully efficient folding. Also involved, together with DnaK and GrpE, in the DNA replication of plasmids through activation of initiation proteins. This Maricaulis maris (strain MCS10) (Caulobacter maris) protein is Chaperone protein DnaJ.